A 184-amino-acid polypeptide reads, in one-letter code: MKIFESCHLFQYPFEQVSAAHWQKYPNEHATHVIAVDTLDRKVLDNGVLYTERLITCHQALPRWILKLIDGAQDCYIRETSYVDLKARTLTLLTSNLTFSDRLRVDETVTYSPHPELEATVFQQEARIEALACMKRLSNLIEQWSVDGFGKKASRGKEGFESVLEKINMSVFQTRPFGSSEATA.

The PRELI/MSF1 domain maps to Met1–Phe172.

Belongs to the slowmo family.

It is found in the cytoplasm. The protein resides in the mitochondrion inner membrane. Its subcellular location is the mitochondrion intermembrane space. Functionally, required for mitochondrial morphology. May control phospholipid metabolism in the mitochondrial intermembrane space. The polypeptide is UPS-like protein C36.10 (Schizosaccharomyces pombe (strain 972 / ATCC 24843) (Fission yeast)).